We begin with the raw amino-acid sequence, 69 residues long: UPF0248 protein AF_0420 (69 aa).

It belongs to the UPF0248 family.

In Archaeoglobus fulgidus (strain ATCC 49558 / DSM 4304 / JCM 9628 / NBRC 100126 / VC-16), this protein is UPF0248 protein AF_0420.